The chain runs to 441 residues: MSNTHNIHWSTPSKRIYDASDIPNFKRSIAYYKIRHTLSVVIEKVKGCDLPPGILDKSIVTRKINNIPPSNTTHSRPLDLPPPQGEEEGDKCNISHSSNQTIRGEANESNYEGLLRILEVLNRYIDETPPLKGPRRFGNLACRDWHEKMNTKMNDLLKDNIKIHNSSFNSEFDGFIKELKYYIENSFGSAIRLDYGTGHELSFLAFIGGLIDFKLLSLEELTGSDILTIFAKYYDLTRRLILVYSLEPAGSHGVWGLDDHYHLIYIFGAAQFNGDQDKIIPPVQQILTRPVLDRYKETNLYVNAISFIHKIKSGPFNEHSPIIFDIHSSVSLWSKVLSGLLKMFEVEVLGKFPVVQHFWFGSSLYPWRDFETNKELPIYKRDEDEMDEDSSGDFLNGNTGIKTTKHNISMTGAPWNLNATQRQDDLNSTTYRGRQPRLGRN.

2 stretches are compositionally biased toward polar residues: residues 66 to 75 (NIPPSNTTHS) and 421 to 432 (QRQDDLNSTTYR). Disordered regions lie at residues 66-100 (NIPPSNTTHSRPLDLPPPQGEEEGDKCNISHSSNQ) and 421-441 (QRQDDLNSTTYRGRQPRLGRN).

The protein belongs to the PTPA-type PPIase family.

It is found in the cytoplasm. Its subcellular location is the nucleus. It carries out the reaction [protein]-peptidylproline (omega=180) = [protein]-peptidylproline (omega=0). Functionally, PPIases accelerate the folding of proteins. It catalyzes the cis-trans isomerization of proline imidic peptide bonds in oligopeptides. Acts as a regulatory subunit for PP2A-like phosphatases modulating their activity or substrate specificity, probably by inducing a conformational change in the catalytic subunit, a direct target of the PPIase. Can reactivate inactive phosphatase PP2A-phosphatase methylesterase complexes (PP2Ai) in presence of ATP and Mg(2+) by dissociating the inactive form from the complex. This Debaryomyces hansenii (strain ATCC 36239 / CBS 767 / BCRC 21394 / JCM 1990 / NBRC 0083 / IGC 2968) (Yeast) protein is Serine/threonine-protein phosphatase 2A activator 1 (RRD1).